Reading from the N-terminus, the 139-residue chain is D-ribose pyranase (139 aa).

The active-site Proton donor is His20. Residues Asp28, His106, and 128-130 each bind substrate; that span reads YAN.

This sequence belongs to the RbsD / FucU family. RbsD subfamily. In terms of assembly, homodecamer.

The protein resides in the cytoplasm. It carries out the reaction beta-D-ribopyranose = beta-D-ribofuranose. It participates in carbohydrate metabolism; D-ribose degradation; D-ribose 5-phosphate from beta-D-ribopyranose: step 1/2. Its function is as follows. Catalyzes the interconversion of beta-pyran and beta-furan forms of D-ribose. The chain is D-ribose pyranase from Glaesserella parasuis serovar 5 (strain SH0165) (Haemophilus parasuis).